Reading from the N-terminus, the 310-residue chain is Ornithine carbamoyltransferase (310 aa).

Residues Ser-56–Thr-59, Gln-83, Arg-107, and His-134–Gln-137 each bind carbamoyl phosphate. L-ornithine is bound by residues Asn-165, Asp-229, and Ser-233–Met-234. Carbamoyl phosphate contacts are provided by residues Cys-269–Leu-270 and Arg-297.

Belongs to the aspartate/ornithine carbamoyltransferase superfamily. OTCase family.

The protein resides in the cytoplasm. The enzyme catalyses carbamoyl phosphate + L-ornithine = L-citrulline + phosphate + H(+). Its pathway is amino-acid biosynthesis; L-arginine biosynthesis; L-arginine from L-ornithine and carbamoyl phosphate: step 1/3. Functionally, reversibly catalyzes the transfer of the carbamoyl group from carbamoyl phosphate (CP) to the N(epsilon) atom of ornithine (ORN) to produce L-citrulline. The sequence is that of Ornithine carbamoyltransferase from Symbiobacterium thermophilum (strain DSM 24528 / JCM 14929 / IAM 14863 / T).